Reading from the N-terminus, the 243-residue chain is uncharacterized protein (243 aa).

The first 16 residues, 1–16 (MKHFIILFLLLFVTAG), serve as a signal peptide directing secretion. The N-palmitoyl cysteine moiety is linked to residue cysteine 17. The S-diacylglycerol cysteine moiety is linked to residue cysteine 17.

It is found in the cell membrane. This is an uncharacterized protein from Bacillus subtilis (strain 168).